An 871-amino-acid chain; its full sequence is Rho guanine nucleotide exchange factor 26 (871 aa).

Disordered stretches follow at residues 1-49, 86-233, and 288-310; these read MDGE…LLIT, AQRR…NPSV, and PLGH…SLRR. Residue Ser22 is modified to Phosphoserine. A compositionally biased stretch (pro residues) spans 136–156; the sequence is PAPPPPPVLRPPRTPNAPAPC. Polar residues predominate over residues 173–192; sequence PTANGLAANNDSPGSGSQSG. Position 392 is a phosphoserine (Ser392). The DH domain maps to 439-623; that stretch reads KRQEAIFEVI…SKLVRLCNEG (185 aa). Residues 655 to 782 form the PH domain; the sequence is WLVKRGELTA…WITALGHSSG (128 aa). Residues 789-850 form the SH3 domain; the sequence is TSLTQVEIVR…PMECAKEITC (62 aa).

As to quaternary structure, interacts with ICAM1 and RHOG. In terms of tissue distribution, isoform 1 is broadly expressed, with highest levels in liver (at protein level). Certain mRNA species appear to be specifically expressed in prostate and liver.

It localises to the cell projection. The protein localises to the ruffle. Its function is as follows. Activates RhoG GTPase by promoting the exchange of GDP by GTP. Required for the formation of membrane ruffles during macropinocytosis. Required for the formation of cup-like structures during trans-endothelial migration of leukocytes. In case of Salmonella enterica infection, activated by SopB, which induces cytoskeleton rearrangements and promotes bacterial entry. This Homo sapiens (Human) protein is Rho guanine nucleotide exchange factor 26 (ARHGEF26).